A 249-amino-acid chain; its full sequence is Triosephosphate isomerase (249 aa).

A substrate-binding site is contributed by 9-11; the sequence is NWK. The active-site Electrophile is the His-95. The active-site Proton acceptor is the Glu-165. Residues Gly-171, Ser-210, and 231-232 each bind substrate; that span reads GG.

The protein belongs to the triosephosphate isomerase family. In terms of assembly, homodimer.

The protein localises to the cytoplasm. The enzyme catalyses D-glyceraldehyde 3-phosphate = dihydroxyacetone phosphate. The protein operates within carbohydrate biosynthesis; gluconeogenesis. It functions in the pathway carbohydrate degradation; glycolysis; D-glyceraldehyde 3-phosphate from glycerone phosphate: step 1/1. Functionally, involved in the gluconeogenesis. Catalyzes stereospecifically the conversion of dihydroxyacetone phosphate (DHAP) to D-glyceraldehyde-3-phosphate (G3P). This Hyphomonas neptunium (strain ATCC 15444) protein is Triosephosphate isomerase.